We begin with the raw amino-acid sequence, 91 residues long: Small ribosomal subunit protein uS19 (91 aa).

This sequence belongs to the universal ribosomal protein uS19 family.

Protein S19 forms a complex with S13 that binds strongly to the 16S ribosomal RNA. This is Small ribosomal subunit protein uS19 from Desulfotalea psychrophila (strain LSv54 / DSM 12343).